A 665-amino-acid chain; its full sequence is Probable arginine--tRNA ligase, cytoplasmic (665 aa).

L-arginine is bound by residues 204 to 206, histidine 215, tyrosine 390, aspartate 394, and glutamine 418; that span reads SPN. A 'HIGH' region motif is present at residues 205–216; that stretch reads PNIAKQMHVGHL. Residues 535-549 are interaction with tRNA; sequence NTAVYLLYTYTRICS.

Belongs to the class-I aminoacyl-tRNA synthetase family.

Its subcellular location is the cytoplasm. The protein localises to the cytosol. The catalysed reaction is tRNA(Arg) + L-arginine + ATP = L-arginyl-tRNA(Arg) + AMP + diphosphate. In terms of biological role, forms part of a macromolecular complex that catalyzes the attachment of specific amino acids to cognate tRNAs during protein synthesis. In Drosophila melanogaster (Fruit fly), this protein is Probable arginine--tRNA ligase, cytoplasmic.